We begin with the raw amino-acid sequence, 55 residues long: Large ribosomal subunit protein bL33 (55 aa).

The protein belongs to the bacterial ribosomal protein bL33 family.

The chain is Large ribosomal subunit protein bL33 from Rhizorhabdus wittichii (strain DSM 6014 / CCUG 31198 / JCM 15750 / NBRC 105917 / EY 4224 / RW1) (Sphingomonas wittichii).